The sequence spans 319 residues: Aspartate carbamoyltransferase catalytic subunit (319 aa).

Carbamoyl phosphate contacts are provided by Arg65 and Thr66. Residue Lys93 coordinates L-aspartate. Carbamoyl phosphate-binding residues include Arg115, His149, and Gln152. Residues Arg182 and Arg237 each contribute to the L-aspartate site. Residues Gly278 and Pro279 each contribute to the carbamoyl phosphate site.

This sequence belongs to the aspartate/ornithine carbamoyltransferase superfamily. ATCase family. As to quaternary structure, heterododecamer (2C3:3R2) of six catalytic PyrB chains organized as two trimers (C3), and six regulatory PyrI chains organized as three dimers (R2).

It carries out the reaction carbamoyl phosphate + L-aspartate = N-carbamoyl-L-aspartate + phosphate + H(+). Its pathway is pyrimidine metabolism; UMP biosynthesis via de novo pathway; (S)-dihydroorotate from bicarbonate: step 2/3. In terms of biological role, catalyzes the condensation of carbamoyl phosphate and aspartate to form carbamoyl aspartate and inorganic phosphate, the committed step in the de novo pyrimidine nucleotide biosynthesis pathway. This Dechloromonas aromatica (strain RCB) protein is Aspartate carbamoyltransferase catalytic subunit.